Here is a 589-residue protein sequence, read N- to C-terminus: Serine/threonine-protein kinase STE7 homolog (589 aa).

The segment covering 1 to 18 (MTRTTRIDTQEATKHKDL) has biased composition (basic and acidic residues). Disordered regions lie at residues 1 to 162 (MTRT…DPDN) and 185 to 233 (RQHY…ASSQ). The segment covering 24–33 (PLSLSSNPNP) has biased composition (low complexity). The segment covering 57–69 (VKSTSGSLRSSDM) has biased composition (polar residues). Positions 92 to 121 (PTASSSATSTPTSNITGSSSASSIQFAQKS) are enriched in low complexity. Polar residues-rich tracts occupy residues 127–136 (IVSQTLSRPS) and 144–162 (SGYS…DPDN). Residues 185 to 203 (RQHYQNSHHHLPTTNRKRQ) are compositionally biased toward basic residues. A compositionally biased stretch (low complexity) spans 206 to 220 (ISSISPTKSSAASSS). Polar residues predominate over residues 221 to 233 (LEPQIQSLPASSQ). Residues 249-565 (LLTLKQLGSG…QLLEDKEHFF (317 aa)) enclose the Protein kinase domain. ATP-binding positions include 255–263 (LGSGNSGSV) and K278. D374 acts as the Proton acceptor in catalysis. Residue S402 is modified to Phosphoserine. Residue T408 is modified to Phosphothreonine. A disordered region spans residues 473 to 499 (IAAERNGQNSPSRSRKNKQKGNGYNSY).

Belongs to the protein kinase superfamily. STE Ser/Thr protein kinase family. MAP kinase kinase subfamily.

It carries out the reaction L-seryl-[protein] + ATP = O-phospho-L-seryl-[protein] + ADP + H(+). The catalysed reaction is L-threonyl-[protein] + ATP = O-phospho-L-threonyl-[protein] + ADP + H(+). The enzyme catalyses L-tyrosyl-[protein] + ATP = O-phospho-L-tyrosyl-[protein] + ADP + H(+). This Candida albicans (strain SC5314 / ATCC MYA-2876) (Yeast) protein is Serine/threonine-protein kinase STE7 homolog (HST7).